Here is a 213-residue protein sequence, read N- to C-terminus: Outer-membrane lipoprotein LolB (213 aa).

Positions 1-24 (MNNLSYFTKTKLVWVILSLSLLSA) are cleaved as a signal peptide. Cys25 carries N-palmitoyl cysteine lipidation. Cys25 carries the S-diacylglycerol cysteine lipid modification.

Belongs to the LolB family. Monomer.

The protein resides in the cell outer membrane. Functionally, plays a critical role in the incorporation of lipoproteins in the outer membrane after they are released by the LolA protein. The chain is Outer-membrane lipoprotein LolB from Shewanella woodyi (strain ATCC 51908 / MS32).